The primary structure comprises 411 residues: NADH-quinone oxidoreductase subunit D (411 aa).

This sequence belongs to the complex I 49 kDa subunit family. In terms of assembly, NDH-1 is composed of 14 different subunits. Subunits NuoB, C, D, E, F, and G constitute the peripheral sector of the complex.

The protein localises to the cell inner membrane. It carries out the reaction a quinone + NADH + 5 H(+)(in) = a quinol + NAD(+) + 4 H(+)(out). In terms of biological role, NDH-1 shuttles electrons from NADH, via FMN and iron-sulfur (Fe-S) centers, to quinones in the respiratory chain. The immediate electron acceptor for the enzyme in this species is believed to be ubiquinone. Couples the redox reaction to proton translocation (for every two electrons transferred, four hydrogen ions are translocated across the cytoplasmic membrane), and thus conserves the redox energy in a proton gradient. The chain is NADH-quinone oxidoreductase subunit D from Phenylobacterium zucineum (strain HLK1).